A 239-amino-acid chain; its full sequence is Probable methylthioribulose-1-phosphate dehydratase (239 aa).

C100 lines the substrate pocket. Zn(2+) is bound by residues H118 and H120. The active-site Proton donor/acceptor is the E141. H197 is a Zn(2+) binding site.

It belongs to the aldolase class II family. MtnB subfamily. Requires Zn(2+) as cofactor.

Its subcellular location is the cytoplasm. It carries out the reaction 5-(methylsulfanyl)-D-ribulose 1-phosphate = 5-methylsulfanyl-2,3-dioxopentyl phosphate + H2O. It functions in the pathway amino-acid biosynthesis; L-methionine biosynthesis via salvage pathway; L-methionine from S-methyl-5-thio-alpha-D-ribose 1-phosphate: step 2/6. Its function is as follows. Catalyzes the dehydration of methylthioribulose-1-phosphate (MTRu-1-P) into 2,3-diketo-5-methylthiopentyl-1-phosphate (DK-MTP-1-P). The sequence is that of Probable methylthioribulose-1-phosphate dehydratase from Leishmania major.